The primary structure comprises 144 residues: Gonadotropin subunit beta-2 (144 aa).

Positions 1-27 (MGTPVKILVVRNHILFSVVVLLAVAQS) are cleaved as a signal peptide. 6 disulfides stabilise this stretch: Cys-33-Cys-81, Cys-47-Cys-96, Cys-50-Cys-134, Cys-58-Cys-112, Cys-62-Cys-114, and Cys-117-Cys-124. An N-linked (GlcNAc...) asparagine glycan is attached at Asn-37. The propeptide occupies 143–144 (VY).

It belongs to the glycoprotein hormones subunit beta family. As to quaternary structure, heterodimer of an alpha and a beta chain.

Its subcellular location is the secreted. Its function is as follows. Involved in gametogenesis and steroidogenesis. The protein is Gonadotropin subunit beta-2 (cgbb) of Cyprinus carpio (Common carp).